Here is a 509-residue protein sequence, read N- to C-terminus: Anaerobic nitric oxide reductase flavorubredoxin (509 aa).

Residues 30–210 are zinc metallo-hydrolase; it reads LQGSSYNSYL…PFSRLVTAKI (181 aa). The Fe cation site is built by His-79, Glu-81, Asp-83, His-147, Asp-166, and His-227. Positions 254–393 constitute a Flavodoxin-like domain; it reads ITLFYDTMSN…VCREHGREIA (140 aa). FMN contacts are provided by residues 260–264 and 342–369; these read TMSNN and AFGS…ETTL. The Rubredoxin-like domain occupies 457-508; the sequence is SGCMQCSVCQWIYDPALGEPMQDVTPGTMWSDVPDSFLCPECGLGKDVFNPI. 4 residues coordinate Fe cation: Cys-462, Cys-465, Cys-495, and Cys-498.

It in the N-terminal section; belongs to the zinc metallo-hydrolase group 3 family. As to quaternary structure, homotetramer. Fe cation serves as cofactor. FMN is required as a cofactor.

The protein localises to the cytoplasm. The protein operates within nitrogen metabolism; nitric oxide reduction. In terms of biological role, anaerobic nitric oxide reductase; uses NADH to detoxify nitric oxide (NO), protecting several 4Fe-4S NO-sensitive enzymes. Has at least 2 reductase partners, only one of which (NorW, flavorubredoxin reductase) has been identified. NO probably binds to the di-iron center; electrons enter from the NorW at rubredoxin and are transferred sequentially to the FMN center and the di-iron center. Also able to function as an aerobic oxygen reductase. This chain is Anaerobic nitric oxide reductase flavorubredoxin, found in Pectobacterium atrosepticum (strain SCRI 1043 / ATCC BAA-672) (Erwinia carotovora subsp. atroseptica).